The following is a 207-amino-acid chain: ATP-dependent Clp protease proteolytic subunit (207 aa).

Catalysis depends on Ser111, which acts as the Nucleophile. Residue His136 is part of the active site.

This sequence belongs to the peptidase S14 family. In terms of assembly, fourteen ClpP subunits assemble into 2 heptameric rings which stack back to back to give a disk-like structure with a central cavity, resembling the structure of eukaryotic proteasomes.

Its subcellular location is the cytoplasm. The enzyme catalyses Hydrolysis of proteins to small peptides in the presence of ATP and magnesium. alpha-casein is the usual test substrate. In the absence of ATP, only oligopeptides shorter than five residues are hydrolyzed (such as succinyl-Leu-Tyr-|-NHMec, and Leu-Tyr-Leu-|-Tyr-Trp, in which cleavage of the -Tyr-|-Leu- and -Tyr-|-Trp bonds also occurs).. In terms of biological role, cleaves peptides in various proteins in a process that requires ATP hydrolysis. Has a chymotrypsin-like activity. Plays a major role in the degradation of misfolded proteins. In Burkholderia mallei (strain ATCC 23344), this protein is ATP-dependent Clp protease proteolytic subunit.